The chain runs to 143 residues: Large ribosomal subunit protein uL13 (143 aa).

The protein belongs to the universal ribosomal protein uL13 family. Part of the 50S ribosomal subunit.

Functionally, this protein is one of the early assembly proteins of the 50S ribosomal subunit, although it is not seen to bind rRNA by itself. It is important during the early stages of 50S assembly. This chain is Large ribosomal subunit protein uL13, found in Variovorax paradoxus (strain S110).